The primary structure comprises 542 residues: Chaperonin GroEL 2 (542 aa).

ATP is bound by residues 30 to 33, lysine 51, 87 to 91, glycine 415, and aspartate 494; these read TLGP and DGTTT.

The protein belongs to the chaperonin (HSP60) family. Forms a cylinder of 14 subunits composed of two heptameric rings stacked back-to-back. Interacts with the co-chaperonin GroES.

Its subcellular location is the cytoplasm. The catalysed reaction is ATP + H2O + a folded polypeptide = ADP + phosphate + an unfolded polypeptide.. Its function is as follows. Together with its co-chaperonin GroES, plays an essential role in assisting protein folding. The GroEL-GroES system forms a nano-cage that allows encapsulation of the non-native substrate proteins and provides a physical environment optimized to promote and accelerate protein folding. The protein is Chaperonin GroEL 2 of Syntrophobacter fumaroxidans (strain DSM 10017 / MPOB).